Here is a 379-residue protein sequence, read N- to C-terminus: Homoserine O-succinyltransferase (379 aa).

The region spanning 51–360 (NAVLICHALS…DAPQGHDAFL (310 aa)) is the AB hydrolase-1 domain. S157 serves as the catalytic Nucleophile. R227 is a substrate binding site. Catalysis depends on residues D323 and H356. D357 is a binding site for substrate.

The protein belongs to the AB hydrolase superfamily. MetX family. Homodimer.

The protein localises to the cytoplasm. It catalyses the reaction L-homoserine + succinyl-CoA = O-succinyl-L-homoserine + CoA. It functions in the pathway amino-acid biosynthesis; L-methionine biosynthesis via de novo pathway; O-succinyl-L-homoserine from L-homoserine: step 1/1. Its function is as follows. Transfers a succinyl group from succinyl-CoA to L-homoserine, forming succinyl-L-homoserine. In Pseudomonas syringae pv. tomato (strain ATCC BAA-871 / DC3000), this protein is Homoserine O-succinyltransferase.